The sequence spans 393 residues: Dwarfin sma-3 (393 aa).

One can recognise an MH1 domain in the interval 10–139 (PAVKKLLGWK…YQRLSRPQGL (130 aa)). Zn(2+)-binding residues include Cys65, Cys110, Cys124, and His129. Positions 136–190 (PQGLNSSMPSPQPISSPNTIWQSSGSSTASCASSPSPSVFSEDGGEVQVHQRPPP) are disordered. A compositionally biased stretch (low complexity) spans 141-176 (SSMPSPQPISSPNTIWQSSGSSTASCASSPSPSVFS). Residues 197 to 393 (WAQITYFELN…TNLMEPNSMT (197 aa)) enclose the MH2 domain.

The protein belongs to the dwarfin/SMAD family.

It localises to the cytoplasm. It is found in the nucleus. Involved in TGF-beta pathway. Plays a role in male tail tip morphogenesis. In Caenorhabditis elegans, this protein is Dwarfin sma-3.